The following is a 439-amino-acid chain: Trigger factor (439 aa).

One can recognise a PPIase FKBP-type domain in the interval 163 to 248 (GDIAVIDFEG…LNQIKERVLP (86 aa)).

This sequence belongs to the FKBP-type PPIase family. Tig subfamily.

The protein localises to the cytoplasm. It catalyses the reaction [protein]-peptidylproline (omega=180) = [protein]-peptidylproline (omega=0). Its function is as follows. Involved in protein export. Acts as a chaperone by maintaining the newly synthesized protein in an open conformation. Functions as a peptidyl-prolyl cis-trans isomerase. This chain is Trigger factor, found in Syntrophotalea carbinolica (strain DSM 2380 / NBRC 103641 / GraBd1) (Pelobacter carbinolicus).